We begin with the raw amino-acid sequence, 508 residues long: Probable cytochrome P450 6d5 (508 aa).

A heme-binding site is contributed by Cys453.

This sequence belongs to the cytochrome P450 family. It depends on heme as a cofactor.

It is found in the endoplasmic reticulum membrane. The protein resides in the microsome membrane. Functionally, may be involved in the metabolism of insect hormones and in the breakdown of synthetic insecticides. The protein is Probable cytochrome P450 6d5 (Cyp6d5) of Drosophila melanogaster (Fruit fly).